Consider the following 395-residue polypeptide: Neuromedin-U receptor 2 (395 aa).

Residues 1-41 (MGKLENASWIHDSLMKYLNSTEEYLAYLCGPKRSDLSLPVS) are Extracellular-facing. Residues asparagine 6 and asparagine 19 are each glycosylated (N-linked (GlcNAc...) asparagine). A helical transmembrane segment spans residues 42 to 62 (VVYALIFVVGVIGNLLVCLVI). Topologically, residues 63–74 (ARHQTLKTPTNY) are cytoplasmic. A helical transmembrane segment spans residues 75–95 (YLFSLAVSDLLVLLLGMPLEV). The Extracellular portion of the chain corresponds to 96–115 (YELWHNYPFLFGPVGCYFKT). The cysteines at positions 111 and 196 are disulfide-linked. Residues 116-138 (ALFETVCFASILSVTTVSIERYV) traverse the membrane as a helical segment. At 139–157 (AIVHPFRAKLESTRRRALR) the chain is on the cytoplasmic side. Residues 158–178 (ILSLVWSFSVVFSLPNTSIHG) form a helical membrane-spanning segment. At 179-212 (IKFQQFPNGSSVPGSATCTVTKPIWVYNFIIQAT) the chain is on the extracellular side. N-linked (GlcNAc...) asparagine glycosylation is present at asparagine 186. The helical transmembrane segment at 213-233 (SFLFYILPMTLISVLYYLMGL) threads the bilayer. The Cytoplasmic segment spans residues 234 to 257 (RLKRDESLEADKVTVNIHRPSRKS). Residues 258-278 (VTKMLFVLVLVFAICWTPFHV) form a helical membrane-spanning segment. Topologically, residues 279 to 293 (DRLFFSFVDEWTESL) are extracellular. The chain crosses the membrane as a helical span at residues 294-314 (AAVFNLIHVVSGVFFYLSSAV). The Cytoplasmic portion of the chain corresponds to 315–395 (NPIIYNLLSR…TTVPCVEEVP (81 aa)).

Belongs to the G-protein coupled receptor 1 family. Expressed primarily in brain tissues, more specifically in medulla and spinal cord. Widespread distribution in peripheral tissues.

The protein resides in the cell membrane. Its function is as follows. Receptor for the neuromedin-U and neuromedin-S neuropeptides. The protein is Neuromedin-U receptor 2 (Nmur2) of Mus musculus (Mouse).